We begin with the raw amino-acid sequence, 268 residues long: Small ribosomal subunit protein eS1 (268 aa).

Residues 1-21 are disordered; it reads MAVGKNKGLSKGGKKGGKKKV.

Belongs to the eukaryotic ribosomal protein eS1 family. As to quaternary structure, component of the small ribosomal subunit. Mature ribosomes consist of a small (40S) and a large (60S) subunit. The 40S subunit contains about 33 different proteins and 1 molecule of RNA (18S). The 60S subunit contains about 49 different proteins and 3 molecules of RNA (28S, 5.8S and 5S).

It localises to the cytoplasm. Functionally, essential for oogenesis; required for late follicle cell development. The sequence is that of Small ribosomal subunit protein eS1 from Drosophila virilis (Fruit fly).